A 937-amino-acid chain; its full sequence is DNA mismatch repair protein msh-2 (937 aa).

Residue 659–666 (GPNMGGKS) participates in ATP binding.

It belongs to the DNA mismatch repair MutS family. Heterodimer of msh2 and msh6.

Its subcellular location is the nucleus. In terms of biological role, involved in post-replicative DNA-mismatch repair. Binds to mismatch-containing DNA. The polypeptide is DNA mismatch repair protein msh-2 (msh-2) (Neurospora crassa (strain ATCC 24698 / 74-OR23-1A / CBS 708.71 / DSM 1257 / FGSC 987)).